We begin with the raw amino-acid sequence, 259 residues long: Pimeloyl-[acyl-carrier protein] methyl ester esterase (259 aa).

Residues Trp-18, 78–79 (SL), and 139–143 (FLALD) each bind substrate. Ser-78 serves as the catalytic Nucleophile. Catalysis depends on residues Asp-203 and His-231. Residue His-231 participates in substrate binding.

It belongs to the AB hydrolase superfamily. Carboxylesterase BioH family. Monomer.

The protein localises to the cytoplasm. The enzyme catalyses 6-carboxyhexanoyl-[ACP] methyl ester + H2O = 6-carboxyhexanoyl-[ACP] + methanol + H(+). It participates in cofactor biosynthesis; biotin biosynthesis. In terms of biological role, the physiological role of BioH is to remove the methyl group introduced by BioC when the pimeloyl moiety is complete. It allows to synthesize pimeloyl-ACP via the fatty acid synthetic pathway through the hydrolysis of the ester bonds of pimeloyl-ACP esters. This is Pimeloyl-[acyl-carrier protein] methyl ester esterase from Stenotrophomonas maltophilia (strain K279a).